A 312-amino-acid chain; its full sequence is Glyoxylate/hydroxypyruvate reductase A (312 aa).

Arg227 is an active-site residue. His275 acts as the Proton donor in catalysis.

This sequence belongs to the D-isomer specific 2-hydroxyacid dehydrogenase family. GhrA subfamily.

Its subcellular location is the cytoplasm. It carries out the reaction glycolate + NADP(+) = glyoxylate + NADPH + H(+). It catalyses the reaction (R)-glycerate + NAD(+) = 3-hydroxypyruvate + NADH + H(+). The catalysed reaction is (R)-glycerate + NADP(+) = 3-hydroxypyruvate + NADPH + H(+). Functionally, catalyzes the NADPH-dependent reduction of glyoxylate and hydroxypyruvate into glycolate and glycerate, respectively. The chain is Glyoxylate/hydroxypyruvate reductase A from Salmonella agona (strain SL483).